The following is a 642-amino-acid chain: Chaperone protein DnaK (642 aa).

Residue threonine 200 is modified to Phosphothreonine; by autocatalysis. Residues 600-616 (EAAQQSAGAAGPMPGAP) show a composition bias toward low complexity. A disordered region spans residues 600–642 (EAAQQSAGAAGPMPGAPAEEEPSDGPRKAKGRVVDAEIVDDDK). The segment covering 623–634 (DGPRKAKGRVVD) has biased composition (basic and acidic residues).

Belongs to the heat shock protein 70 family.

In terms of biological role, acts as a chaperone. The protein is Chaperone protein DnaK of Akkermansia muciniphila (strain ATCC BAA-835 / DSM 22959 / JCM 33894 / BCRC 81048 / CCUG 64013 / CIP 107961 / Muc).